The sequence spans 959 residues: DNA-directed RNA polymerase subunit beta'' (959 aa).

Zn(2+) is bound by residues Cys-211, Cys-288, Cys-295, and Cys-298.

This sequence belongs to the RNA polymerase beta' chain family. RpoC2 subfamily. In plastids the minimal PEP RNA polymerase catalytic core is composed of four subunits: alpha, beta, beta', and beta''. When a (nuclear-encoded) sigma factor is associated with the core the holoenzyme is formed, which can initiate transcription. It depends on Zn(2+) as a cofactor.

Its subcellular location is the plastid. It localises to the apicoplast. It catalyses the reaction RNA(n) + a ribonucleoside 5'-triphosphate = RNA(n+1) + diphosphate. Functionally, DNA-dependent RNA polymerase catalyzes the transcription of DNA into RNA using the four ribonucleoside triphosphates as substrates. The sequence is that of DNA-directed RNA polymerase subunit beta'' from Plasmodium falciparum (isolate 3D7).